Here is a 37-residue protein sequence, read N- to C-terminus: Large ribosomal subunit protein bL36 (37 aa).

Belongs to the bacterial ribosomal protein bL36 family.

In Leptospira interrogans serogroup Icterohaemorrhagiae serovar Lai (strain 56601), this protein is Large ribosomal subunit protein bL36.